The following is a 694-amino-acid chain: TBC1 domain family member 14 (694 aa).

Phosphoserine is present on Ser-92. A compositionally biased stretch (basic and acidic residues) spans Thr-272–Gly-289. The segment at Thr-272–Leu-305 is disordered. Residue Ser-296 is modified to Phosphoserine. A Rab-GAP TBC domain is found at Gly-402–Gly-612.

In terms of assembly, interacts with ULK1. May interact with RAB11A and RAB11B, but does not exhibit any GTPase-activating activity toward these proteins. Interacts with TRAPPC8.

Its subcellular location is the golgi apparatus. It is found in the cis-Golgi network. The protein resides in the trans-Golgi network. Plays a role in the regulation of starvation-induced autophagosome formation. Together with the TRAPPIII complex, regulates a constitutive trafficking step from peripheral recycling endosomes to the early Golgi, maintaining the cycling pool of ATG9 required for initiation of autophagy. This is TBC1 domain family member 14 (Tbc1d14) from Mus musculus (Mouse).